The following is a 384-amino-acid chain: Mitogen-activated protein kinase 8 (384 aa).

In terms of domain architecture, Protein kinase spans 26–321 (YQNLKPIGSG…VDEALQHPYI (296 aa)). ATP contacts are provided by residues 32-40 (IGSGAQGIV) and Lys-55. Residue Cys-116 is modified to S-nitrosocysteine. Residue Asp-151 is the Proton acceptor of the active site. Thr-183 is modified (phosphothreonine; by MAP2K7). The short motif at 183-185 (TPY) is the TXY element. A Phosphotyrosine; by MAP2K4 modification is found at Tyr-185. Residue Ser-377 is modified to Phosphoserine.

It belongs to the protein kinase superfamily. CMGC Ser/Thr protein kinase family. MAP kinase subfamily. In terms of assembly, binds to at least four scaffolding proteins, MAPK8IP1/JIP-1, MAPK8IP2/JIP-2, MAPK8IP3/JIP-3/JSAP1 and SPAG9/MAPK8IP4/JIP-4. These proteins also bind other components of the JNK signaling pathway. Forms a complex with MAPK8IP1 and ARHGEF28. Interacts with TP53 and WWOX. Interacts with JAMP. Interacts with NFATC4. Interacts with MECOM; regulates JNK signaling. Interacts with PIN1; this interaction mediates MAPK8 conformational changes leading to the binding of MAPK8 to its substrates. Interacts with HSF1 (via D domain and preferentially with hyperphosphorylated form); this interaction occurs under both normal growth conditions and immediately upon heat shock. Interacts (phosphorylated form) with NFE2; the interaction phosphorylates NFE2 in undifferentiated cells. Interacts with GRIPAP1. Interacts with POU5F1; phosphorylates POU5F1 at 'Ser-347'. Found in a complex with SH3RF1, RAC1, MAP3K11/MLK3, MAP2K7/MKK7 and MAPK8IP1/JIP1. Found in a complex with SH3RF1, RAC2, MAP3K7/TAK1, MAP2K7/MKK7, MAPK8IP1/JIP1 and MAPK9/JNK2. Requires Mg(2+) as cofactor. In terms of processing, phosphorylated by TAOK2. Dually phosphorylated on Thr-183 and Tyr-185 by MAP2K7 and MAP2K4, which activates the enzyme. May be phosphorylated at Thr-183 and Tyr-185 by MAP3K1/MEKK1. Phosphorylated form is more concentrated at synapses than none-phosphorylated. As to expression, brain (at protein level).

The protein resides in the cytoplasm. Its subcellular location is the nucleus. The protein localises to the synapse. The catalysed reaction is L-seryl-[protein] + ATP = O-phospho-L-seryl-[protein] + ADP + H(+). The enzyme catalyses L-threonyl-[protein] + ATP = O-phospho-L-threonyl-[protein] + ADP + H(+). With respect to regulation, inhibited by SERPINB3. Activated by threonine and tyrosine phosphorylation by either of two dual specificity kinases, MAP2K4 and MAP2K7. MAP2K4 shows a strong preference for Tyr-185 while MAP2K7 phosphorylates Tyr-183 preferentially. Inhibited by dual specificity phosphatases, such as DUSP1. Functionally, serine/threonine-protein kinase involved in various processes such as cell proliferation, differentiation, migration, transformation and programmed cell death. Extracellular stimuli such as pro-inflammatory cytokines or physical stress stimulate the stress-activated protein kinase/c-Jun N-terminal kinase (SAP/JNK) signaling pathway. In this cascade, two dual specificity kinases MAP2K4/MKK4 and MAP2K7/MKK7 phosphorylate and activate MAPK8/JNK1. In turn, MAPK8/JNK1 phosphorylates a number of transcription factors, primarily components of AP-1 such as JUN, JDP2 and ATF2 and thus regulates AP-1 transcriptional activity. Phosphorylates the replication licensing factor CDT1, inhibiting the interaction between CDT1 and the histone H4 acetylase HBO1 to replication origins. Loss of this interaction abrogates the acetylation required for replication initiation. Promotes stressed cell apoptosis by phosphorylating key regulatory factors including p53/TP53 and Yes-associates protein YAP1. In T-cells, MAPK8 and MAPK9 are required for polarized differentiation of T-helper cells into Th1 cells. Contributes to the survival of erythroid cells by phosphorylating the antagonist of cell death BAD upon EPO stimulation. Mediates starvation-induced BCL2 phosphorylation, BCL2 dissociation from BECN1, and thus activation of autophagy. Phosphorylates STMN2 and hence regulates microtubule dynamics, controlling neurite elongation in cortical neurons. In the developing brain, through its cytoplasmic activity on STMN2, negatively regulates the rate of exit from multipolar stage and of radial migration from the ventricular zone. Phosphorylates several other substrates including heat shock factor protein 4 (HSF4), the deacetylase SIRT1, ELK1, or the E3 ligase ITCH. Phosphorylates the CLOCK-BMAL1 heterodimer and plays a role in the regulation of the circadian clock. Phosphorylates the heat shock transcription factor HSF1, suppressing HSF1-induced transcriptional activity. Phosphorylates POU5F1, which results in the inhibition of POU5F1's transcriptional activity and enhances its proteasomal degradation. Phosphorylates JUND and this phosphorylation is inhibited in the presence of MEN1. In neurons, phosphorylates SYT4 which captures neuronal dense core vesicles at synapses. Phosphorylates EIF4ENIF1/4-ET in response to oxidative stress, promoting P-body assembly. Phosphorylates SIRT6 in response to oxidative stress, stimulating its mono-ADP-ribosyltransferase activity. Phosphorylates NLRP3, promoting assembly of the NLRP3 inflammasome. Phosphorylates ALKBH5 in response to reactive oxygen species (ROS), promoting ALKBH5 sumoylation and inactivation. This Mus musculus (Mouse) protein is Mitogen-activated protein kinase 8 (Mapk8).